The chain runs to 269 residues: Troponin T, fast skeletal muscle (269 aa).

Residues 1–23 (MSDEEVEQVEEQYEEEEEAQEEA) are compositionally biased toward acidic residues. A disordered region spans residues 1–72 (MSDEEVEQVE…EKVDFDDIQK (72 aa)). An N-acetylserine modification is found at serine 2. A Phosphoserine modification is found at serine 2. A compositionally biased stretch (basic and acidic residues) spans 24 to 34 (AEVHEEVHEPE). Residues 35–47 (EVQEDTAEEDAEE) show a composition bias toward acidic residues. The span at 60 to 72 (PEGEKVDFDDIQK) shows a compositional bias: basic and acidic residues. The residue at position 88 (serine 88) is a Phosphoserine. The segment covering 111–153 (RAERAEQQRIRAEKERERQNRLAEEKARREEEDAKRRAEDDLK) has biased composition (basic and acidic residues). Residues 111 to 158 (RAERAEQQRIRAEKERERQNRLAEEKARREEEDAKRRAEDDLKKKKAL) form a disordered region. Phosphoserine is present on residues serine 159, serine 166, and serine 167. The tract at residues 245-269 (RIDQAQKHSKKAGTPAKGKVGGRWK) is disordered.

Belongs to the troponin T family. As to expression, in fetal and adult fast skeletal muscles, with a higher level expression in fetal than in adult muscle.

Its function is as follows. Troponin T is the tropomyosin-binding subunit of troponin, the thin filament regulatory complex which confers calcium-sensitivity to striated muscle actomyosin ATPase activity. This is Troponin T, fast skeletal muscle (TNNT3) from Homo sapiens (Human).